We begin with the raw amino-acid sequence, 206 residues long: GTP cyclohydrolase 1 (206 aa).

Positions 95, 98, and 166 each coordinate Zn(2+).

The protein belongs to the GTP cyclohydrolase I family. In terms of assembly, toroid-shaped homodecamer, composed of two pentamers of five dimers.

The catalysed reaction is GTP + H2O = 7,8-dihydroneopterin 3'-triphosphate + formate + H(+). It functions in the pathway cofactor biosynthesis; 7,8-dihydroneopterin triphosphate biosynthesis; 7,8-dihydroneopterin triphosphate from GTP: step 1/1. This is GTP cyclohydrolase 1 from Bartonella henselae (strain ATCC 49882 / DSM 28221 / CCUG 30454 / Houston 1) (Rochalimaea henselae).